The sequence spans 143 residues: Boletus edulis lectin (143 aa).

Beta-D-Gal-(1-&gt;3)-alpha-D-GalNAc contacts are provided by residues Ala30, 49–50 (SG), and 72–73 (HN). N-acetyl-alpha-D-galactosamine-binding positions include 49-50 (SG) and 72-73 (HN). N,N'-diacetylchitobiose is bound by residues 79 to 82 (DVVT), Arg103, and Tyr114. N-acetyl-alpha-D-glucosamine-binding positions include 79–82 (DVVT), Arg103, and Tyr114.

It belongs to the fungal fruit body lectin family. Homotetramer.

Functionally, lectin that recognizes O-linked galactose-beta-1,3-N-acetylgalactosamine, a disaccharide (Thomsen-Friedenreich antigen or T-disaccharide), present on cell surface glycoproteins. Can also bind chitin, N,N'-diacetylchitobiose, N-acetylgalactosamine and N-acetylglucosamine. Inhibits proliferation of colon, breast and liver cancer cell lines (in vitro). The chain is Boletus edulis lectin from Boletus edulis (King bolete).